We begin with the raw amino-acid sequence, 240 residues long: Chloroplastic group IIB intron splicing facilitator CRS2-B, chloroplastic (240 aa).

It belongs to the PTH family. CRS2 subfamily. As to quaternary structure, part of large ribonucleo-protein complexes that include group IIB introns and either CAF1 or CAF2.

The protein resides in the plastid. It localises to the chloroplast stroma. Functionally, required for the splicing of group IIB introns in chloroplasts. The sequence is that of Chloroplastic group IIB intron splicing facilitator CRS2-B, chloroplastic (CRS2B) from Arabidopsis thaliana (Mouse-ear cress).